The sequence spans 1020 residues: Valine--tRNA ligase (1020 aa).

Residues 45–55 carry the 'HIGH' region motif; that stretch reads PNVTGALHVGH. The short motif at 661 to 665 is the 'KMSKS' region element; that stretch reads KMSKT. K664 is a binding site for ATP. Residues 955 to 1020 adopt a coiled-coil conformation; that stretch reads AEKDRLEKAK…EALARLAELG (66 aa).

This sequence belongs to the class-I aminoacyl-tRNA synthetase family. ValS type 1 subfamily. In terms of assembly, monomer.

Its subcellular location is the cytoplasm. It carries out the reaction tRNA(Val) + L-valine + ATP = L-valyl-tRNA(Val) + AMP + diphosphate. Its function is as follows. Catalyzes the attachment of valine to tRNA(Val). As ValRS can inadvertently accommodate and process structurally similar amino acids such as threonine, to avoid such errors, it has a 'posttransfer' editing activity that hydrolyzes mischarged Thr-tRNA(Val) in a tRNA-dependent manner. This is Valine--tRNA ligase from Ruegeria pomeroyi (strain ATCC 700808 / DSM 15171 / DSS-3) (Silicibacter pomeroyi).